Here is a 461-residue protein sequence, read N- to C-terminus: V-type ATP synthase beta chain (461 aa).

It belongs to the ATPase alpha/beta chains family.

Produces ATP from ADP in the presence of a proton gradient across the membrane. The V-type beta chain is a regulatory subunit. This is V-type ATP synthase beta chain from Streptococcus pneumoniae (strain CGSP14).